Here is a 287-residue protein sequence, read N- to C-terminus: Shikimate dehydrogenase (NADP(+)) (287 aa).

Shikimate contacts are provided by residues 18 to 20 (SYS) and Thr-66. The active-site Proton acceptor is Lys-70. Glu-82 serves as a coordination point for NADP(+). Residues Asn-91 and Asp-106 each coordinate shikimate. Residues 130–134 (GSGGA) and Met-228 contribute to the NADP(+) site. Tyr-230 is a shikimate binding site. NADP(+) is bound at residue Gly-251.

Belongs to the shikimate dehydrogenase family. In terms of assembly, homodimer.

The enzyme catalyses shikimate + NADP(+) = 3-dehydroshikimate + NADPH + H(+). Its pathway is metabolic intermediate biosynthesis; chorismate biosynthesis; chorismate from D-erythrose 4-phosphate and phosphoenolpyruvate: step 4/7. Its function is as follows. Involved in the biosynthesis of the chorismate, which leads to the biosynthesis of aromatic amino acids. Catalyzes the reversible NADPH linked reduction of 3-dehydroshikimate (DHSA) to yield shikimate (SA). This Chlorobium chlorochromatii (strain CaD3) protein is Shikimate dehydrogenase (NADP(+)).